The following is a 250-amino-acid chain: MTAQTCCPPTHDDALARARAGESLWRLGALAFGHPVEEFHRALLDGSFHEAVDAAWSALTGRPWPREAPPARFADLEAGYIAAFEHGRGGKRLASLLAGEHKDLLAGQAPPRLHAERRRFYRHFGLRQATADEGRVDEPDHLACLLEFMAVLSHLEAAAIVGGRDPGPVRRAARDFLVRYVEPMLALIAAVLRRPSEPPLDATLVRLTRDLHGFADSRIAELAAQVGPYRSAEARSDSAPDAAAHQNLWG.

The segment at 231 to 250 (SAEARSDSAPDAAAHQNLWG) is disordered.

The protein belongs to the type II DMSO reductase enzyme chaperone family.

Its subcellular location is the cytoplasm. Functionally, may function as a system-specific chaperone protein essential for the assembly of an active dimethyl sulfide dehydrogenase DdhABC. This is Dimethyl sulfide dehydrogenase assembly chaperone protein (ddhD) from Rhodovulum sulfidophilum (Rhodobacter sulfidophilus).